A 61-amino-acid polypeptide reads, in one-letter code: Small ribosomal subunit protein uS14B (61 aa).

Zn(2+) contacts are provided by Cys24, Cys27, Cys40, and Cys43.

Belongs to the universal ribosomal protein uS14 family. Zinc-binding uS14 subfamily. As to quaternary structure, part of the 30S ribosomal subunit. Contacts proteins S3 and S10. Zn(2+) serves as cofactor.

Its function is as follows. Binds 16S rRNA, required for the assembly of 30S particles and may also be responsible for determining the conformation of the 16S rRNA at the A site. The chain is Small ribosomal subunit protein uS14B from Lacticaseibacillus paracasei (strain ATCC 334 / BCRC 17002 / CCUG 31169 / CIP 107868 / KCTC 3260 / NRRL B-441) (Lactobacillus paracasei).